The sequence spans 330 residues: 4-hydroxythreonine-4-phosphate dehydrogenase (330 aa).

Substrate contacts are provided by H134 and T135. The a divalent metal cation site is built by H164, H209, and H264. The substrate site is built by K272, N281, and R290.

Belongs to the PdxA family. As to quaternary structure, homodimer. Requires Zn(2+) as cofactor. Mg(2+) is required as a cofactor. Co(2+) serves as cofactor.

Its subcellular location is the cytoplasm. It catalyses the reaction 4-(phosphooxy)-L-threonine + NAD(+) = 3-amino-2-oxopropyl phosphate + CO2 + NADH. Its pathway is cofactor biosynthesis; pyridoxine 5'-phosphate biosynthesis; pyridoxine 5'-phosphate from D-erythrose 4-phosphate: step 4/5. Functionally, catalyzes the NAD(P)-dependent oxidation of 4-(phosphooxy)-L-threonine (HTP) into 2-amino-3-oxo-4-(phosphooxy)butyric acid which spontaneously decarboxylates to form 3-amino-2-oxopropyl phosphate (AHAP). The sequence is that of 4-hydroxythreonine-4-phosphate dehydrogenase from Pseudoalteromonas translucida (strain TAC 125).